A 183-amino-acid chain; its full sequence is Translation initiation factor IF-3 (183 aa).

It belongs to the IF-3 family. As to quaternary structure, monomer.

It is found in the cytoplasm. In terms of biological role, IF-3 binds to the 30S ribosomal subunit and shifts the equilibrium between 70S ribosomes and their 50S and 30S subunits in favor of the free subunits, thus enhancing the availability of 30S subunits on which protein synthesis initiation begins. The chain is Translation initiation factor IF-3 from Pseudomonas putida (strain W619).